The chain runs to 89 residues: MEVARKALVAVAVLGGGAGVGSILFALVTPGELQKQSMLQEMPERDSRRRDEAVRTTELVMATLKDAAATKENVAWRRNWTVSGDGRSA.

Over 1 to 7 the chain is Mitochondrial matrix; it reads MEVARKA. The chain crosses the membrane as a helical span at residues 8–28; that stretch reads LVAVAVLGGGAGVGSILFALV. Residues 23–80 form a mediates lipid-binding region; that stretch reads ILFALVTPGELQKQSMLQEMPERDSRRRDEAVRTTELVMATLKDAAATKENVAWRRNW. The Mitochondrial intermembrane segment spans residues 29-89; sequence TPGELQKQSM…WTVSGDGRSA (61 aa).

Belongs to the UQCC3 family. Associates with the ubiquinol-cytochrome c reductase complex (mitochondrial respiratory chain complex III(CIII) or cytochrome b-c1 complex). Interacts with UQCC1. Forms a complex, named COMC, composed of UQCC1, UQCC2; UQCC3 and UQCC4; mediates MT-CYB hemylation and association with the first nuclear-encoded complex III subunit UQCRQ. In terms of processing, probably cleaved by OMA1 under mitochondrial stress conditions.

The protein localises to the mitochondrion inner membrane. In terms of biological role, required for the assembly of the ubiquinol-cytochrome c reductase complex (mitochondrial respiratory chain complex III or cytochrome b-c1 complex), mediating cytochrome b recruitment and probably stabilization within the complex. Thereby, plays an important role in ATP production by mitochondria. Cardiolipin-binding protein, it may also control the cardiolipin composition of mitochondria membranes and their morphology. The sequence is that of Ubiquinol-cytochrome-c reductase complex assembly factor 3 from Mus musculus (Mouse).